The chain runs to 479 residues: Alpha,alpha-trehalose-phosphate synthase [UDP-forming] 2 (479 aa).

2 residues coordinate D-glucose 6-phosphate: tyrosine 96 and aspartate 150. UDP is bound by residues arginine 287 and lysine 292. 2 residues coordinate UDP-alpha-D-glucose: arginine 287 and lysine 292. Arginine 325 is a D-glucose 6-phosphate binding site. Residues 363-364 (SV) and 390-394 (LVSFE) each bind UDP. A UDP-alpha-D-glucose-binding site is contributed by 386-394 (DGMNLVSFE).

It belongs to the glycosyltransferase 20 family.

The catalysed reaction is D-glucose 6-phosphate + UDP-alpha-D-glucose = alpha,alpha-trehalose 6-phosphate + UDP + H(+). The protein operates within carbohydrate biosynthesis. Synthase catalytic subunit of the trehalose synthase complex that catalyzes the production of trehalose from glucose-6-phosphate and UDP-alpha-D-glucose in a two step process. The disaccharide trehalose serves as a storage carbohydrate that is mobilized during conidial germination. Regulates the level of trehalose as a protectant for cell integrity during thermal and oxidative stress. The polypeptide is Alpha,alpha-trehalose-phosphate synthase [UDP-forming] 2 (Aspergillus fumigatus (strain ATCC MYA-4609 / CBS 101355 / FGSC A1100 / Af293) (Neosartorya fumigata)).